A 1137-amino-acid polypeptide reads, in one-letter code: Receptor-type guanylate cyclase gcy-1 (1137 aa).

An N-terminal signal peptide occupies residues 1–18; it reads MQIFTILLLFNIFPSIFV. At 19-494 the chain is on the extracellular side; sequence QNLPDTTVAP…CPVSFWEQYK (476 aa). N-linked (GlcNAc...) asparagine glycans are attached at residues N219, N348, N358, N384, N417, and N451. A helical membrane pass occupies residues 495–515; sequence ILIFVAIAVIVLMVLIMIIGC. Topologically, residues 516 to 1137 are cytoplasmic; it reads LCVISGKRAE…FKMDTLKVAN (622 aa). The 270-residue stretch at 557-826 folds into the Protein kinase domain; sequence LQSAPSISTG…ENICSQMKGL (270 aa). A coiled-coil region spans residues 840–871; sequence NMLEEYTSTLEEEIEERTKELTLEKKKADILL. Positions 898-1028 constitute a Guanylate cyclase domain; sequence TVFFSDVVKF…DTVNTASRME (131 aa). A disordered region spans residues 1086–1122; it reads ELRSISNRSTPPVTNDRWIPNPSSSHGSRPSSVYDPL. Positions 1088–1098 are enriched in polar residues; it reads RSISNRSTPPV. Over residues 1105 to 1117 the composition is skewed to low complexity; it reads PNPSSSHGSRPSS.

The protein belongs to the adenylyl cyclase class-4/guanylyl cyclase family. In terms of tissue distribution, expressed predominantly in sensory neurons. Expressed asymmetrically in the right ASE (ASER) neuron and bilaterally in ASI and URX neurons. Expressed in PVT and bilaterally in AIY non-sensory neurons. Expressed in intestine.

The protein localises to the membrane. It carries out the reaction GTP = 3',5'-cyclic GMP + diphosphate. Guanylate cyclase involved in the production of the second messenger cGMP. Involved in the sensing of K+ gradient by the ASE right (ASER) sensory neuron. The sequence is that of Receptor-type guanylate cyclase gcy-1 (gcy-1) from Caenorhabditis elegans.